A 147-amino-acid polypeptide reads, in one-letter code: Small ribosomal subunit protein bS18 (147 aa).

The protein belongs to the bacterial ribosomal protein bS18 family. In terms of assembly, part of the 30S ribosomal subunit. Forms a tight heterodimer with protein bS6.

Its function is as follows. Binds as a heterodimer with protein bS6 to the central domain of the 16S rRNA, where it helps stabilize the platform of the 30S subunit. The protein is Small ribosomal subunit protein bS18 of Dehalococcoides mccartyi (strain ATCC BAA-2100 / JCM 16839 / KCTC 5957 / BAV1).